Reading from the N-terminus, the 380-residue chain is MKKLKVMTVFGTRPEAIKMAPLVLELKKYPEIDSYVTVTAQHRQMLDQVLDAFHIKPDFDLNIMKERQTLAEITSNALVRLDELFKDIKPDIVLVHGDTTTTFAGSLAAFYHQIAVGHVEAGLRTGNKYSPFPEELNRQMTGAIADLHFAPTGQAKDNLLKENKKADSIFVTGNTAIDALNTTVRDGYSHPVLDQVGEDKMILLTAHRRENLGEPMENMFKAIRRIVGEFEDVQVVYPVHLNPVVREAAHKHFGDSDRVHLIEPLEVIDFHNFAAKSHFILTDSGGVQEEAPSLGKPVLVLRDTTERPEGVEAGTLKLAGTDEENIYQLAKQLLTDPDEYKKMSQASNPYGDGEASRRIVEELLFHYGYRKEQPDSFTGK.

This sequence belongs to the UDP-N-acetylglucosamine 2-epimerase family.

It localises to the cytoplasm. It catalyses the reaction UDP-N-acetyl-alpha-D-glucosamine = UDP-N-acetyl-alpha-D-mannosamine. It functions in the pathway cell wall biogenesis; poly(glycerol phosphate) teichoic acid biosynthesis. Functionally, catalyzes the conversion of UDP-N-acetylglucosamine into UDP-N-acetylmannosamine, a precursor of the teichoic acid linkage unit. This is UDP-N-acetylglucosamine 2-epimerase (mnaA) from Bacillus subtilis (strain 168).